Here is a 200-residue protein sequence, read N- to C-terminus: ATP-dependent Clp protease proteolytic subunit (200 aa).

The active-site Nucleophile is serine 97. Histidine 122 is an active-site residue.

It belongs to the peptidase S14 family. Fourteen ClpP subunits assemble into 2 heptameric rings which stack back to back to give a disk-like structure with a central cavity, resembling the structure of eukaryotic proteasomes.

It localises to the cytoplasm. It catalyses the reaction Hydrolysis of proteins to small peptides in the presence of ATP and magnesium. alpha-casein is the usual test substrate. In the absence of ATP, only oligopeptides shorter than five residues are hydrolyzed (such as succinyl-Leu-Tyr-|-NHMec, and Leu-Tyr-Leu-|-Tyr-Trp, in which cleavage of the -Tyr-|-Leu- and -Tyr-|-Trp bonds also occurs).. Cleaves peptides in various proteins in a process that requires ATP hydrolysis. Has a chymotrypsin-like activity. Plays a major role in the degradation of misfolded proteins. The protein is ATP-dependent Clp protease proteolytic subunit of Oleidesulfovibrio alaskensis (strain ATCC BAA-1058 / DSM 17464 / G20) (Desulfovibrio alaskensis).